The following is a 721-amino-acid chain: Phosphoribosylformylglycinamidine synthase subunit PurL (721 aa).

Residue His47 is part of the active site. Positions 50 and 89 each coordinate ATP. Glu91 is a Mg(2+) binding site. Substrate is bound by residues 92 to 95 and Arg114; that span reads SHNH. His93 acts as the Proton acceptor in catalysis. Asp115 contacts Mg(2+). Gln238 serves as a coordination point for substrate. Asp266 provides a ligand contact to Mg(2+). 310 to 312 provides a ligand contact to substrate; it reads ESQ. The ATP site is built by Asp490 and Gly527. Residue Asn528 coordinates Mg(2+). Ser530 is a substrate binding site.

Belongs to the FGAMS family. Monomer. Part of the FGAM synthase complex composed of 1 PurL, 1 PurQ and 2 PurS subunits.

The protein localises to the cytoplasm. The enzyme catalyses N(2)-formyl-N(1)-(5-phospho-beta-D-ribosyl)glycinamide + L-glutamine + ATP + H2O = 2-formamido-N(1)-(5-O-phospho-beta-D-ribosyl)acetamidine + L-glutamate + ADP + phosphate + H(+). It participates in purine metabolism; IMP biosynthesis via de novo pathway; 5-amino-1-(5-phospho-D-ribosyl)imidazole from N(2)-formyl-N(1)-(5-phospho-D-ribosyl)glycinamide: step 1/2. Its function is as follows. Part of the phosphoribosylformylglycinamidine synthase complex involved in the purines biosynthetic pathway. Catalyzes the ATP-dependent conversion of formylglycinamide ribonucleotide (FGAR) and glutamine to yield formylglycinamidine ribonucleotide (FGAM) and glutamate. The FGAM synthase complex is composed of three subunits. PurQ produces an ammonia molecule by converting glutamine to glutamate. PurL transfers the ammonia molecule to FGAR to form FGAM in an ATP-dependent manner. PurS interacts with PurQ and PurL and is thought to assist in the transfer of the ammonia molecule from PurQ to PurL. The polypeptide is Phosphoribosylformylglycinamidine synthase subunit PurL (Ruegeria sp. (strain TM1040) (Silicibacter sp.)).